Here is a 307-residue protein sequence, read N- to C-terminus: Phospho-N-acetylmuramoyl-pentapeptide-transferase (307 aa).

10 helical membrane-spanning segments follow: residues 3–23 (IILFTSLVAFFVFLLILKYWI), 47–67 (SGTPVMGGIIFLIVSIPFLFF), 71–91 (FFPSLSTILFGLLGLLDDFKL), 105–125 (IFLSFIITLLLYIFSFHDYKI), 137–157 (IFYVILFFVVFIAVPNAINLT), 162–182 (GLAGGTSLITLFFFLIYNFQF), 186–206 (LTLEISLMITALIAFLWFNSH), 210–230 (IFMGDVGAFALGGFIASLSII), 237–257 (LVFLGGIFLIESLSVFIQVFF), and 285–305 (VVWRFYIIHLIMMIGGIILWN).

This sequence belongs to the glycosyltransferase 4 family. MraY subfamily. Requires Mg(2+) as cofactor.

Its subcellular location is the cell inner membrane. It catalyses the reaction UDP-N-acetyl-alpha-D-muramoyl-L-alanyl-gamma-D-glutamyl-meso-2,6-diaminopimeloyl-D-alanyl-D-alanine + di-trans,octa-cis-undecaprenyl phosphate = di-trans,octa-cis-undecaprenyl diphospho-N-acetyl-alpha-D-muramoyl-L-alanyl-D-glutamyl-meso-2,6-diaminopimeloyl-D-alanyl-D-alanine + UMP. The protein operates within cell wall biogenesis; peptidoglycan biosynthesis. Its function is as follows. Catalyzes the initial step of the lipid cycle reactions in the biosynthesis of the cell wall peptidoglycan: transfers peptidoglycan precursor phospho-MurNAc-pentapeptide from UDP-MurNAc-pentapeptide onto the lipid carrier undecaprenyl phosphate, yielding undecaprenyl-pyrophosphoryl-MurNAc-pentapeptide, known as lipid I. The protein is Phospho-N-acetylmuramoyl-pentapeptide-transferase of Dictyoglomus turgidum (strain DSM 6724 / Z-1310).